A 309-amino-acid polypeptide reads, in one-letter code: Diacylglycerol kinase (309 aa).

The DAGKc domain maps to 9 to 140 (HEIGKVTALT…IDLGRIQDDN (132 aa)). ATP is bound by residues 19–23 (NPLSG), 76–82 (GDGVVSN), and threonine 101. Residues aspartate 226, aspartate 229, and leucine 231 each contribute to the Mg(2+) site. Residue aspartate 285 is the Proton acceptor of the active site.

It belongs to the diacylglycerol/lipid kinase family. It depends on Mg(2+) as a cofactor.

Its subcellular location is the secreted. It localises to the cell wall. The catalysed reaction is a 1,2-diacyl-sn-glycerol + ATP = a 1,2-diacyl-sn-glycero-3-phosphate + ADP + H(+). It carries out the reaction N-hexadecanoylsphing-4-enine + ATP = N-(hexadecanoyl)-sphing-4-enine-1-phosphate + ADP + H(+). In terms of biological role, catalyzes the phosphorylation of diacylglycerol (DAG) into phosphatidic acid. Is involved in the biosynthesis of phosphatidylinositol mannosides (PIMs), probably via a role in the biosynthesis of phosphatidylinositol (PI), a PIM precursor, which is derived from phosphatidic acid. Is also able to phosphorylate other various amphipathic lipids of host and bacterial origin in vitro, such as ceramide. The chain is Diacylglycerol kinase (dagK) from Mycobacterium tuberculosis (strain CDC 1551 / Oshkosh).